A 340-amino-acid chain; its full sequence is Phosphoribosylformylglycinamidine cyclo-ligase (340 aa).

This sequence belongs to the AIR synthase family.

Its subcellular location is the cytoplasm. The catalysed reaction is 2-formamido-N(1)-(5-O-phospho-beta-D-ribosyl)acetamidine + ATP = 5-amino-1-(5-phospho-beta-D-ribosyl)imidazole + ADP + phosphate + H(+). The protein operates within purine metabolism; IMP biosynthesis via de novo pathway; 5-amino-1-(5-phospho-D-ribosyl)imidazole from N(2)-formyl-N(1)-(5-phospho-D-ribosyl)glycinamide: step 2/2. The polypeptide is Phosphoribosylformylglycinamidine cyclo-ligase (Acetivibrio thermocellus (strain ATCC 27405 / DSM 1237 / JCM 9322 / NBRC 103400 / NCIMB 10682 / NRRL B-4536 / VPI 7372) (Clostridium thermocellum)).